The following is a 264-amino-acid chain: S-adenosylmethionine decarboxylase proenzyme (264 aa).

Catalysis depends on Ser112, which acts as the Schiff-base intermediate with substrate; via pyruvic acid. Pyruvic acid (Ser); by autocatalysis is present on Ser112. His117 acts as the Proton acceptor; for processing activity in catalysis. Cys140 (proton donor; for catalytic activity) is an active-site residue.

It belongs to the prokaryotic AdoMetDC family. Type 2 subfamily. As to quaternary structure, heterooctamer of four alpha and four beta chains arranged as a tetramer of alpha/beta heterodimers. It depends on pyruvate as a cofactor. In terms of processing, is synthesized initially as an inactive proenzyme. Formation of the active enzyme involves a self-maturation process in which the active site pyruvoyl group is generated from an internal serine residue via an autocatalytic post-translational modification. Two non-identical subunits are generated from the proenzyme in this reaction, and the pyruvate is formed at the N-terminus of the alpha chain, which is derived from the carboxyl end of the proenzyme. The post-translation cleavage follows an unusual pathway, termed non-hydrolytic serinolysis, in which the side chain hydroxyl group of the serine supplies its oxygen atom to form the C-terminus of the beta chain, while the remainder of the serine residue undergoes an oxidative deamination to produce ammonia and the pyruvoyl group blocking the N-terminus of the alpha chain.

It carries out the reaction S-adenosyl-L-methionine + H(+) = S-adenosyl 3-(methylsulfanyl)propylamine + CO2. It functions in the pathway amine and polyamine biosynthesis; S-adenosylmethioninamine biosynthesis; S-adenosylmethioninamine from S-adenosyl-L-methionine: step 1/1. Its function is as follows. Catalyzes the decarboxylation of S-adenosylmethionine to S-adenosylmethioninamine (dcAdoMet), the propylamine donor required for the synthesis of the polyamines spermine and spermidine from the diamine putrescine. The sequence is that of S-adenosylmethionine decarboxylase proenzyme from Escherichia coli O127:H6 (strain E2348/69 / EPEC).